A 351-amino-acid chain; its full sequence is MITTSGLTKVYRSRGREVTALDGVDLHVREGEVYGVIGQSGAGKSSLIRCVNLLERPTAGTVTVAGADLTALAGRGPRAGRELRQARSRIGMVFQHFNLLSSRTVQDNVELPLEILGKSGKERSRKALELLDLVGLADKARAYPAQLSGGQKQRVGIARALAGDPKVLLSDEATSALDPETTRSILQLLRDLNRQLGLTVLLITHEMDVVKSICDSAALMDRGRVVESGTVGELLATPGSELAAALFPVGGDASGDDRTVLDVTFHGEAATQPVISQLSRTYNIDISILGAAIDTVGGLQIGRMRIELPGRYEDNVVPVGFLREQGLQIDVVNETPDAATASASLVKEGAK.

The ABC transporter domain maps to 2–247 (ITTSGLTKVY…PGSELAAALF (246 aa)). 38–45 (GQSGAGKS) is a binding site for ATP.

The protein belongs to the ABC transporter superfamily. Methionine importer (TC 3.A.1.24) family. The complex is composed of two ATP-binding proteins (MetN), two transmembrane proteins (MetI) and a solute-binding protein (MetQ).

The protein localises to the cell membrane. It carries out the reaction L-methionine(out) + ATP + H2O = L-methionine(in) + ADP + phosphate + H(+). The enzyme catalyses D-methionine(out) + ATP + H2O = D-methionine(in) + ADP + phosphate + H(+). Functionally, part of the ABC transporter complex MetNIQ involved in methionine import. Responsible for energy coupling to the transport system. The chain is Methionine import ATP-binding protein MetN from Streptomyces coelicolor (strain ATCC BAA-471 / A3(2) / M145).